The sequence spans 270 residues: Urease accessory protein UreD (270 aa).

Belongs to the UreD family. In terms of assembly, ureD, UreF and UreG form a complex that acts as a GTP-hydrolysis-dependent molecular chaperone, activating the urease apoprotein by helping to assemble the nickel containing metallocenter of UreC. The UreE protein probably delivers the nickel.

Its subcellular location is the cytoplasm. Functionally, required for maturation of urease via the functional incorporation of the urease nickel metallocenter. This is Urease accessory protein UreD from Beijerinckia indica subsp. indica (strain ATCC 9039 / DSM 1715 / NCIMB 8712).